The following is a 144-amino-acid chain: uncharacterized protein (144 aa).

Residues 13–120 (IFCGIVEGNV…VPKYETGLGF (108 aa)) enclose the HIT domain. The Histidine triad motif motif lies at 105–109 (HYHMH).

This is an uncharacterized protein from Mycoplasma pneumoniae (strain ATCC 29342 / M129 / Subtype 1) (Mycoplasmoides pneumoniae).